A 911-amino-acid chain; its full sequence is Anoctamin-6 (911 aa).

Topologically, residues 1–301 (MQMMTRKVLL…YGEKIGIYFA (301 aa)) are cytoplasmic. The helical transmembrane segment at 302–322 (WLGYYTQMLLLAAVVGVACFL) threads the bilayer. The Extracellular portion of the chain corresponds to 323–376 (YGYLDQDNCTWSKEVCDPDIGGQILMCPQCDRLCPFWRLNITCESSKKLCIFDS). An N-linked (GlcNAc...) asparagine glycan is attached at Asn330. Intrachain disulfides connect Cys331-Cys372, Cys338-Cys365, Cys349-Cys807, Cys352-Cys356, and Cys596-Cys601. A glycan (N-linked (GlcNAc...) asparagine) is linked at Asn362. A helical membrane pass occupies residues 377–397 (FGTLIFAVFMGVWVTLFLEFW). The Cytoplasmic portion of the chain corresponds to 398–456 (KRRQAELEYEWDTVELQQEEQARPEYEAQCNHVVINEITQEEERIPFTTCGKCIRVTLC). Residues 457–477 (ASAVFFWILLIIASVIGIIVY) form a helical membrane-spanning segment. The Extracellular portion of the chain corresponds to 478 to 510 (RLSVFIVFSTTLPKNPNGTDPIQKYLTPQMATS). Asn494 carries N-linked (GlcNAc...) asparagine glycosylation. Residues 511 to 531 (ITASIISFIIIMILNTIYEKV) traverse the membrane as a helical segment. Residues 532–552 (AIMITNFELPRTQTDYENSLT) lie on the Cytoplasmic side of the membrane. The helical transmembrane segment at 553-573 (MKMFLFQFVNYYSSCFYIAFF) threads the bilayer. Residues 574-602 (KGKFVGYPGDPVYLLGKYRSEECDPGGCL) are Extracellular-facing. A helical transmembrane segment spans residues 603 to 622 (LELTTQLTIIMGGKAIWNNI). The Cytoplasmic segment spans residues 623 to 664 (QEVLLPWVMNLIGRYKRVSGSEKITPRWEQDYHLQPMGKLGL). Residues Glu624, Glu667, and Glu670 each contribute to the Ca(2+) site. 2 helical membrane passes run 665–685 (FYEY…VASF) and 686–706 (PLAP…DAWK). Residues 707–723 (LTTQFRRMVPEKAQDIG) lie on the Cytoplasmic side of the membrane. The chain crosses the membrane as a helical span at residues 724-744 (AWQPIMQGIAILAVVTNAMII). The Extracellular portion of the chain corresponds to 745 to 837 (AFTSDMIPRL…YWHVIAAKLA (93 aa)). Asn778, Asn785, and Asn803 each carry an N-linked (GlcNAc...) asparagine glycan. The chain crosses the membrane as a helical span at residues 838–858 (FIIVMEHIIYSVKFFISYAIP). Topologically, residues 859 to 911 (DVSKITKSKIKREKYLTQKLLHESHLKDLTKNMGIIAERIGGTVDNSVRPKLE) are cytoplasmic.

It belongs to the anoctamin family. In terms of assembly, homodimer. As to expression, predominant expression seen in epithelial tissues. Also found in skeletal system where it is primarily expressed in osteoblasts.

The protein resides in the cell membrane. The enzyme catalyses a 1,2-diacyl-sn-glycero-3-phospho-L-serine(in) = a 1,2-diacyl-sn-glycero-3-phospho-L-serine(out). The catalysed reaction is a beta-D-galactosyl-(1&lt;-&gt;1')-N-acylsphing-4-enine(out) = a beta-D-galactosyl-(1&lt;-&gt;1')-N-acylsphing-4-enine(in). It catalyses the reaction a 1,2-diacyl-sn-glycero-3-phosphocholine(in) = a 1,2-diacyl-sn-glycero-3-phosphocholine(out). Its activity is regulated as follows. Exhibits synergistic gating by Ca(2+) and voltage. Inhibited by some non-specific cation channel blockers such as: ruthenium red, 2-aminoethyl diphenylborinate (2APB), gadolinium and cadmium ions. Functionally, small-conductance calcium-activated nonselective cation (SCAN) channel which acts as a regulator of phospholipid scrambling in platelets, osteoblasts and fetal thymocytes. Phospholipid scrambling results in surface exposure of phosphatidylserine which in platelets is essential to trigger the clotting system whereas in osteoblasts is essential for the deposition of hydroxyapatite during bone mineralization. Has calcium-dependent phospholipid scramblase activity; scrambles phosphatidylserine, phosphatidylcholine and galactosylceramide. Can generate outwardly rectifying chloride channel currents in airway epithelial cells and Jurkat T lymphocytes. This Mus musculus (Mouse) protein is Anoctamin-6 (Ano6).